Consider the following 237-residue polypeptide: Ribonuclease PH (237 aa).

Residues Arg86 and 124–126 (GTR) contribute to the phosphate site.

Belongs to the RNase PH family. Homohexameric ring arranged as a trimer of dimers.

It catalyses the reaction tRNA(n+1) + phosphate = tRNA(n) + a ribonucleoside 5'-diphosphate. Functionally, phosphorolytic 3'-5' exoribonuclease that plays an important role in tRNA 3'-end maturation. Removes nucleotide residues following the 3'-CCA terminus of tRNAs; can also add nucleotides to the ends of RNA molecules by using nucleoside diphosphates as substrates, but this may not be physiologically important. Probably plays a role in initiation of 16S rRNA degradation (leading to ribosome degradation) during starvation. This is Ribonuclease PH from Dinoroseobacter shibae (strain DSM 16493 / NCIMB 14021 / DFL 12).